The following is a 360-amino-acid chain: Peptide chain release factor 1 (360 aa).

At Gln237 the chain carries N5-methylglutamine.

It belongs to the prokaryotic/mitochondrial release factor family. In terms of processing, methylated by PrmC. Methylation increases the termination efficiency of RF1.

Its subcellular location is the cytoplasm. Peptide chain release factor 1 directs the termination of translation in response to the peptide chain termination codons UAG and UAA. The protein is Peptide chain release factor 1 (prfA) of Pseudomonas aeruginosa (strain ATCC 15692 / DSM 22644 / CIP 104116 / JCM 14847 / LMG 12228 / 1C / PRS 101 / PAO1).